Here is an 84-residue protein sequence, read N- to C-terminus: Small ribosomal subunit protein uS17 (84 aa).

Belongs to the universal ribosomal protein uS17 family. Part of the 30S ribosomal subunit.

Its function is as follows. One of the primary rRNA binding proteins, it binds specifically to the 5'-end of 16S ribosomal RNA. This chain is Small ribosomal subunit protein uS17, found in Clostridium perfringens (strain SM101 / Type A).